The primary structure comprises 429 residues: MSRADDDAVGVPPTCGGRSDEEERRIVPGPNPQDGAKDGAKATAVPREPDEAALAAMSNQELLALGGKLDGVRIAYKEPRWPVEGTKAEKRAERSVAVWLLLGGVFGLALLLIFLFWPWEFKAADGESDFIYSLTTPLYGLTFGLSILSIAIGAVLYQKRFIPEEISIQERHDGASREIDRKTVVANLTDAFEGSTIRRRKLIGLSFGVGMGAFGLGTLVAFAGGLIKNPWKPVVPTAEGKKAVLWTSGWTPRYQGETIYLARATGTEDGPPFIKMRPEDIDAGGMETVFPWRESDGDGTTVESHHKLQEIAMGIRNPVMLIRIKPSDLGRVVKRKGQESFNFGEFFAFTKVCSHLGCPSSLYEQQSYRILCPCHQSQFDALHFAKPIFGPAARALAQLPITIDTDGYLVANGDFVEPVGPAFWERTTT.

The segment at 1-45 (MSRADDDAVGVPPTCGGRSDEEERRIVPGPNPQDGAKDGAKATAV) is disordered. The next 3 helical transmembrane spans lie at 96–116 (VAVWLLLGGVFGLALLLIFLF), 137–157 (PLYGLTFGLSILSIAIGAVLY), and 207–227 (FGVGMGAFGLGTLVAFAGGLI). In terms of domain architecture, Rieske spans 316–410 (RNPVMLIRIK…ITIDTDGYLV (95 aa)). C353, H355, C372, and H375 together coordinate [2Fe-2S] cluster. Cysteines 358 and 374 form a disulfide.

It belongs to the Rieske iron-sulfur protein family. In terms of assembly, the cytochrome bc1 complex is composed of a cytochrome b (QcrB), the Rieske iron-sulfur protein (QcrA) and a diheme cytochrome c (QcrC) subunit. It depends on [2Fe-2S] cluster as a cofactor.

It localises to the cell membrane. In terms of biological role, iron-sulfur subunit of the cytochrome bc1 complex, an essential component of the respiratory electron transport chain required for ATP synthesis. The bc1 complex catalyzes the oxidation of menaquinol and the reduction of cytochrome c in the respiratory chain. The bc1 complex operates through a Q-cycle mechanism that couples electron transfer to generation of the proton gradient that drives ATP synthesis. This chain is Cytochrome bc1 complex Rieske iron-sulfur subunit (qcrA), found in Mycobacterium bovis (strain ATCC BAA-935 / AF2122/97).